The sequence spans 599 residues: Elongation factor 4 (599 aa).

A tr-type G domain is found at 2-184 (NYKRNFSIIA…RLVRDIPAPK (183 aa)). GTP-binding positions include 14-19 (DHGKST) and 131-134 (NKID).

The protein belongs to the TRAFAC class translation factor GTPase superfamily. Classic translation factor GTPase family. LepA subfamily.

The protein resides in the cell membrane. The catalysed reaction is GTP + H2O = GDP + phosphate + H(+). In terms of biological role, required for accurate and efficient protein synthesis under certain stress conditions. May act as a fidelity factor of the translation reaction, by catalyzing a one-codon backward translocation of tRNAs on improperly translocated ribosomes. Back-translocation proceeds from a post-translocation (POST) complex to a pre-translocation (PRE) complex, thus giving elongation factor G a second chance to translocate the tRNAs correctly. Binds to ribosomes in a GTP-dependent manner. The protein is Elongation factor 4 of Hamiltonella defensa subsp. Acyrthosiphon pisum (strain 5AT).